The following is a 199-amino-acid chain: dCTP deaminase (199 aa).

Residues 110-115, Asp-128, 136-138, Tyr-171, and Gln-182 each bind dCTP; these read RSSLAR and VLE. Glu-138 functions as the Proton donor/acceptor in the catalytic mechanism.

The protein belongs to the dCTP deaminase family. In terms of assembly, homotrimer.

It catalyses the reaction dCTP + H2O + H(+) = dUTP + NH4(+). It participates in pyrimidine metabolism; dUMP biosynthesis; dUMP from dCTP (dUTP route): step 1/2. Catalyzes the deamination of dCTP to dUTP. This chain is dCTP deaminase, found in Pseudoalteromonas atlantica (strain T6c / ATCC BAA-1087).